The primary structure comprises 279 residues: Probable endonuclease 4 (279 aa).

Zn(2+)-binding residues include histidine 69, histidine 109, glutamate 145, aspartate 179, histidine 182, histidine 216, aspartate 229, histidine 231, and glutamate 261.

Belongs to the AP endonuclease 2 family. Zn(2+) is required as a cofactor.

The catalysed reaction is Endonucleolytic cleavage to 5'-phosphooligonucleotide end-products.. Its function is as follows. Endonuclease IV plays a role in DNA repair. It cleaves phosphodiester bonds at apurinic or apyrimidinic (AP) sites, generating a 3'-hydroxyl group and a 5'-terminal sugar phosphate. In Chlorobium luteolum (strain DSM 273 / BCRC 81028 / 2530) (Pelodictyon luteolum), this protein is Probable endonuclease 4.